We begin with the raw amino-acid sequence, 117 residues long: Large ribosomal subunit protein uL22 (117 aa).

Belongs to the universal ribosomal protein uL22 family. Part of the 50S ribosomal subunit.

In terms of biological role, this protein binds specifically to 23S rRNA; its binding is stimulated by other ribosomal proteins, e.g. L4, L17, and L20. It is important during the early stages of 50S assembly. It makes multiple contacts with different domains of the 23S rRNA in the assembled 50S subunit and ribosome. Its function is as follows. The globular domain of the protein is located near the polypeptide exit tunnel on the outside of the subunit, while an extended beta-hairpin is found that lines the wall of the exit tunnel in the center of the 70S ribosome. The polypeptide is Large ribosomal subunit protein uL22 (Lactobacillus helveticus (strain DPC 4571)).